The sequence spans 499 residues: Lysine--tRNA ligase (499 aa).

Positions 408 and 415 each coordinate Mg(2+).

It belongs to the class-II aminoacyl-tRNA synthetase family. In terms of assembly, homodimer. Mg(2+) is required as a cofactor.

It localises to the cytoplasm. It carries out the reaction tRNA(Lys) + L-lysine + ATP = L-lysyl-tRNA(Lys) + AMP + diphosphate. The polypeptide is Lysine--tRNA ligase (Bacillus thuringiensis (strain Al Hakam)).